The sequence spans 147 residues: UPF0178 protein IL2341 (147 aa).

The protein belongs to the UPF0178 family.

The polypeptide is UPF0178 protein IL2341 (Idiomarina loihiensis (strain ATCC BAA-735 / DSM 15497 / L2-TR)).